Reading from the N-terminus, the 174-residue chain is RNA pyrophosphohydrolase (174 aa).

Positions 6-149 (GYRPNVGIIL…KRDVYLGALK (144 aa)) constitute a Nudix hydrolase domain. Positions 38-59 (GGIKPGESPETAMYRELYEEVG) match the Nudix box motif.

It belongs to the Nudix hydrolase family. RppH subfamily. A divalent metal cation serves as cofactor.

Its function is as follows. Accelerates the degradation of transcripts by removing pyrophosphate from the 5'-end of triphosphorylated RNA, leading to a more labile monophosphorylated state that can stimulate subsequent ribonuclease cleavage. In Neisseria meningitidis serogroup A / serotype 4A (strain DSM 15465 / Z2491), this protein is RNA pyrophosphohydrolase.